The sequence spans 129 residues: 3-aminoacrylate deaminase RutC (129 aa).

The protein belongs to the RutC family.

It catalyses the reaction (Z)-3-aminoacrylate + H2O + H(+) = 3-oxopropanoate + NH4(+). Its function is as follows. Involved in pyrimidine catabolism. Catalyzes the deamination of 3-aminoacrylate to malonic semialdehyde, a reaction that can also occur spontaneously. RutC may facilitate the reaction and modulate the metabolic fitness, rather than catalyzing essential functions. This is 3-aminoacrylate deaminase RutC from Caulobacter vibrioides (strain ATCC 19089 / CIP 103742 / CB 15) (Caulobacter crescentus).